A 354-amino-acid chain; its full sequence is Uroporphyrinogen decarboxylase (354 aa).

Substrate-binding positions include 25–29 (RQAGR), Phe44, Asp75, Tyr152, Thr207, and His330.

The protein belongs to the uroporphyrinogen decarboxylase family. In terms of assembly, homodimer.

It localises to the cytoplasm. The catalysed reaction is uroporphyrinogen III + 4 H(+) = coproporphyrinogen III + 4 CO2. Its pathway is porphyrin-containing compound metabolism; protoporphyrin-IX biosynthesis; coproporphyrinogen-III from 5-aminolevulinate: step 4/4. Its function is as follows. Catalyzes the decarboxylation of four acetate groups of uroporphyrinogen-III to yield coproporphyrinogen-III. The polypeptide is Uroporphyrinogen decarboxylase (Xanthomonas axonopodis pv. citri (strain 306)).